Here is a 166-residue protein sequence, read N- to C-terminus: Large ribosomal subunit protein uL10 (166 aa).

Belongs to the universal ribosomal protein uL10 family. In terms of assembly, part of the ribosomal stalk of the 50S ribosomal subunit. The N-terminus interacts with L11 and the large rRNA to form the base of the stalk. The C-terminus forms an elongated spine to which L12 dimers bind in a sequential fashion forming a multimeric L10(L12)X complex.

Functionally, forms part of the ribosomal stalk, playing a central role in the interaction of the ribosome with GTP-bound translation factors. The polypeptide is Large ribosomal subunit protein uL10 (rplJ) (Neisseria meningitidis serogroup A / serotype 4A (strain DSM 15465 / Z2491)).